A 233-amino-acid chain; its full sequence is Small ribosomal subunit protein uS3 (233 aa).

Residues 39-107 enclose the KH type-2 domain; it reads VRKYLTKELE…PAQINIAEVR (69 aa).

The protein belongs to the universal ribosomal protein uS3 family. Part of the 30S ribosomal subunit. Forms a tight complex with proteins S10 and S14.

In terms of biological role, binds the lower part of the 30S subunit head. Binds mRNA in the 70S ribosome, positioning it for translation. In Pectobacterium carotovorum subsp. carotovorum (strain PC1), this protein is Small ribosomal subunit protein uS3.